An 885-amino-acid polypeptide reads, in one-letter code: Eukaryotic translation initiation factor 3 subunit C (885 aa).

The disordered stretch occupies residues 1–81 (MSFFAKLQGS…SDSDDERQAV (81 aa)). Over residues 9 to 28 (GSDSESSSGSESEESILSGS) the composition is skewed to low complexity. Acidic residues predominate over residues 55–76 (EESESEEESSDEDEEEMSDSDD). The PCI domain maps to 624–797 (FHMHLNVELL…GVVIFHRVEQ (174 aa)). A disordered region spans residues 822–885 (LDVKLGNQGQ…TTMGRRVTAQ (64 aa)). The segment covering 855 to 872 (RGTYRGRGGRGGRGGFNQ) has biased composition (gly residues).

The protein belongs to the eIF-3 subunit C family. In terms of assembly, component of the eukaryotic translation initiation factor 3 (eIF-3) complex.

It is found in the cytoplasm. Its function is as follows. Component of the eukaryotic translation initiation factor 3 (eIF-3) complex, which is involved in protein synthesis of a specialized repertoire of mRNAs and, together with other initiation factors, stimulates binding of mRNA and methionyl-tRNAi to the 40S ribosome. The eIF-3 complex specifically targets and initiates translation of a subset of mRNAs involved in cell proliferation. The chain is Eukaryotic translation initiation factor 3 subunit C from Cryptococcus neoformans var. neoformans serotype D (strain B-3501A) (Filobasidiella neoformans).